The following is a 395-amino-acid chain: NAD(P)H-quinone oxidoreductase subunit H, chloroplastic (395 aa).

Belongs to the complex I 49 kDa subunit family. NDH is composed of at least 16 different subunits, 5 of which are encoded in the nucleus.

The protein resides in the plastid. The protein localises to the chloroplast thylakoid membrane. The catalysed reaction is a plastoquinone + NADH + (n+1) H(+)(in) = a plastoquinol + NAD(+) + n H(+)(out). It carries out the reaction a plastoquinone + NADPH + (n+1) H(+)(in) = a plastoquinol + NADP(+) + n H(+)(out). Functionally, NDH shuttles electrons from NAD(P)H:plastoquinone, via FMN and iron-sulfur (Fe-S) centers, to quinones in the photosynthetic chain and possibly in a chloroplast respiratory chain. The immediate electron acceptor for the enzyme in this species is believed to be plastoquinone. Couples the redox reaction to proton translocation, and thus conserves the redox energy in a proton gradient. This is NAD(P)H-quinone oxidoreductase subunit H, chloroplastic from Coffea arabica (Arabian coffee).